A 388-amino-acid chain; its full sequence is LL-diaminopimelate aminotransferase (388 aa).

Residues Tyr16 and Gly41 each coordinate substrate. Residues Tyr70, 104–105 (SK), Tyr129, Asn179, Tyr210, and 239–241 (SLS) contribute to the pyridoxal 5'-phosphate site. Substrate is bound by residues Lys105, Tyr129, and Asn179. At Lys242 the chain carries N6-(pyridoxal phosphate)lysine. Arg250 provides a ligand contact to pyridoxal 5'-phosphate. Arg368 serves as a coordination point for substrate.

Belongs to the class-I pyridoxal-phosphate-dependent aminotransferase family. LL-diaminopimelate aminotransferase subfamily. Homodimer. Pyridoxal 5'-phosphate serves as cofactor.

The catalysed reaction is (2S,6S)-2,6-diaminopimelate + 2-oxoglutarate = (S)-2,3,4,5-tetrahydrodipicolinate + L-glutamate + H2O + H(+). It functions in the pathway amino-acid biosynthesis; L-lysine biosynthesis via DAP pathway; LL-2,6-diaminopimelate from (S)-tetrahydrodipicolinate (aminotransferase route): step 1/1. Functionally, involved in the synthesis of meso-diaminopimelate (m-DAP or DL-DAP), required for both lysine and peptidoglycan biosynthesis. Catalyzes the direct conversion of tetrahydrodipicolinate to LL-diaminopimelate. This is LL-diaminopimelate aminotransferase from Maridesulfovibrio salexigens (strain ATCC 14822 / DSM 2638 / NCIMB 8403 / VKM B-1763) (Desulfovibrio salexigens).